The primary structure comprises 625 residues: DNA-directed RNA polymerase subunit gamma (625 aa).

Residues Cys71, Cys73, Cys86, and Cys89 each coordinate Zn(2+). Mg(2+) contacts are provided by Asp467, Asp469, and Asp471.

This sequence belongs to the RNA polymerase beta' chain family. RpoC1 subfamily. In terms of assembly, in cyanobacteria the RNAP catalytic core is composed of 2 alpha, 1 beta, 1 beta', 1 gamma and 1 omega subunit. When a sigma factor is associated with the core the holoenzyme is formed, which can initiate transcription. Mg(2+) is required as a cofactor. Requires Zn(2+) as cofactor.

It carries out the reaction RNA(n) + a ribonucleoside 5'-triphosphate = RNA(n+1) + diphosphate. Functionally, DNA-dependent RNA polymerase catalyzes the transcription of DNA into RNA using the four ribonucleoside triphosphates as substrates. This is DNA-directed RNA polymerase subunit gamma from Rippkaea orientalis (strain PCC 8801 / RF-1) (Cyanothece sp. (strain PCC 8801)).